Reading from the N-terminus, the 76-residue chain is Defensin-like protein 122 (76 aa).

The signal sequence occupies residues 1 to 25 (MSKTTVIAIFMVVLVLGLVTKETQG). Disulfide bonds link cysteine 29–cysteine 74, cysteine 39–cysteine 60, cysteine 44–cysteine 68, and cysteine 48–cysteine 70.

This sequence belongs to the DEFL family. Expressed in flower buds, but not in stems, roots or rosette leaves.

The protein localises to the secreted. This Arabidopsis thaliana (Mouse-ear cress) protein is Defensin-like protein 122 (LCR30).